Reading from the N-terminus, the 107-residue chain is Large ribosomal subunit protein P2 (107 aa).

The disordered stretch occupies residues 86 to 107 (PAAAAAEAEEEDDDDMGFGLFD). Residues 92-101 (EAEEEDDDDM) are compositionally biased toward acidic residues.

Belongs to the eukaryotic ribosomal protein P1/P2 family. As to quaternary structure, P1 and P2 exist as dimers at the large ribosomal subunit. Post-translationally, phosphorylated.

Its function is as follows. Plays an important role in the elongation step of protein synthesis. The sequence is that of Large ribosomal subunit protein P2 from Trypanosoma brucei brucei.